Here is a 211-residue protein sequence, read N- to C-terminus: Dual specificity protein phosphatase 26 (211 aa).

One can recognise a Tyrosine-protein phosphatase domain in the interval N60–Q207. C152 acts as the Phosphocysteine intermediate in catalysis.

This sequence belongs to the protein-tyrosine phosphatase family. Non-receptor class dual specificity subfamily. In terms of assembly, interacts with HSF4.

It localises to the cytoplasm. Its subcellular location is the nucleus. The protein localises to the golgi apparatus. The catalysed reaction is O-phospho-L-tyrosyl-[protein] + H2O = L-tyrosyl-[protein] + phosphate. It carries out the reaction O-phospho-L-seryl-[protein] + H2O = L-seryl-[protein] + phosphate. It catalyses the reaction O-phospho-L-threonyl-[protein] + H2O = L-threonyl-[protein] + phosphate. Functionally, inactivates MAPK1 and MAPK3 which leads to dephosphorylation of heat shock factor protein 4 and a reduction in its DNA-binding activity. This Bos taurus (Bovine) protein is Dual specificity protein phosphatase 26 (DUSP26).